A 64-amino-acid polypeptide reads, in one-letter code: Neurotoxin lambda-MeuTx (64 aa).

The N-terminal stretch at 1–18 is a signal peptide; sequence MSTFIVVFLLLTAILCHA. A propeptide spanning residues 19–27 is cleaved from the precursor; the sequence is EHAIDETAR. 3 cysteine pairs are disulfide-bonded: Cys-29–Cys-43, Cys-36–Cys-49, and Cys-42–Cys-58.

The protein belongs to the scorpion calcin-like family. As to expression, expressed by the venom gland.

The protein localises to the secreted. In terms of biological role, voltage-gated potassium channel (Kv) inhibitor. In addition it may increase intracellular calcium release through the activation of nuclear inositol 1,4,5-trisphosphate receptors (ITPR) of cardiomyocytes, thereby causing an increase in the contraction frequency of these cells. The sequence is that of Neurotoxin lambda-MeuTx from Mesobuthus eupeus (Lesser Asian scorpion).